We begin with the raw amino-acid sequence, 391 residues long: Inner membrane protein YdcO (391 aa).

At 1 to 9 (MRLFSIPPP) the chain is on the cytoplasmic side. A helical membrane pass occupies residues 10-30 (TLLAGFLAVLIGYASSAAIIW). Topologically, residues 31 to 42 (QAAIVAGATTAQ) are periplasmic. A helical membrane pass occupies residues 43–63 (ISGWMTALGLAMGVSTLTLTL). At 64–93 (WYRVPVLTAWSTPGAALLVTGLQGLTLNEA) the chain is on the cytoplasmic side. Residues 94–114 (IGVFIVTNALIVLCGITGLFA) form a helical membrane-spanning segment. The Periplasmic portion of the chain corresponds to 115–123 (RLMRIIPHS). The helical transmembrane segment at 124 to 144 (LAAAMLAGILLRFGLQAFASL) threads the bilayer. The Cytoplasmic portion of the chain corresponds to 145-167 (DGQFTLCGSMLLVWLATKAVAPR). The helical transmembrane segment at 168 to 188 (YAVIAAMIIGIVIVIAQGDVV) threads the bilayer. Over 189–200 (TTDVVFKPVLPT) the chain is Periplasmic. Residues 201-221 (YITPDFSFAHSLSVALPLFLV) traverse the membrane as a helical segment. Residues 222-246 (TMASQNAPGIAAMKAAGYSAPVSPL) are Cytoplasmic-facing. A helical transmembrane segment spans residues 247-267 (IVFTGLLALVFSPFGVYSVGI). The Periplasmic segment spans residues 268-287 (AAITAAICQSPEAHPDKDQR). Residues 288 to 308 (WLAAAVAGIFYLLAGLFGSAI) traverse the membrane as a helical segment. Over 309 to 311 (TGM) the chain is Cytoplasmic. Residues 312–332 (MAALPVSWIQMLAGLALLSTI) form a helical membrane-spanning segment. At 333 to 361 (GGSLYQALHNERERDAAVVAFLVTASGLT) the chain is on the periplasmic side. Residues 362–382 (LVGIGSAFWGLIAGGVCYVVL) form a helical membrane-spanning segment. Residues 383 to 391 (NLIADRNRY) lie on the Cytoplasmic side of the membrane.

It is found in the cell inner membrane. This chain is Inner membrane protein YdcO (ydcO), found in Escherichia coli (strain K12).